Reading from the N-terminus, the 752-residue chain is Probable beta-glucosidase D (752 aa).

The first 18 residues, 1–18 (MRFVSLAVGAALLGAAGA), serve as a signal peptide directing secretion. N-linked (GlcNAc...) asparagine glycosylation is found at asparagine 187 and asparagine 237. The active site involves aspartate 265. Asparagine 299, asparagine 343, asparagine 441, asparagine 510, asparagine 532, asparagine 571, asparagine 586, asparagine 638, asparagine 661, and asparagine 743 each carry an N-linked (GlcNAc...) asparagine glycan.

Belongs to the glycosyl hydrolase 3 family.

It localises to the secreted. It catalyses the reaction Hydrolysis of terminal, non-reducing beta-D-glucosyl residues with release of beta-D-glucose.. It participates in glycan metabolism; cellulose degradation. Beta-glucosidases are one of a number of cellulolytic enzymes involved in the degradation of cellulosic biomass. Catalyzes the last step releasing glucose from the inhibitory cellobiose. The sequence is that of Probable beta-glucosidase D (bglD) from Aspergillus flavus (strain ATCC 200026 / FGSC A1120 / IAM 13836 / NRRL 3357 / JCM 12722 / SRRC 167).